Consider the following 219-residue polypeptide: Guanylate kinase (219 aa).

The Guanylate kinase-like domain maps to 15 to 194 (GLMFVLSSPS…AFAEVQSILK (180 aa)). ATP is bound at residue 22–29 (SPSGAGKT).

It belongs to the guanylate kinase family.

Its subcellular location is the cytoplasm. The enzyme catalyses GMP + ATP = GDP + ADP. In terms of biological role, essential for recycling GMP and indirectly, cGMP. This chain is Guanylate kinase, found in Nitrobacter hamburgensis (strain DSM 10229 / NCIMB 13809 / X14).